A 387-amino-acid chain; its full sequence is Zinc finger transcription factor YY1 (387 aa).

C2H2-type zinc fingers lie at residues phenylalanine 79–histidine 103, tyrosine 108–histidine 132, tyrosine 138–histidine 162, histidine 168–histidine 193, and tyrosine 230–histidine 255. The MED18-binding stretch occupies residues threonine 201 to arginine 290. The segment at histidine 258–aspartate 387 is disordered. Phosphoserine is present on serine 284. Basic residues predominate over residues lysine 291 to serine 305. The Nuclear localization signal signature appears at glycine 319–serine 326. Residues alanine 339–glycine 367 are a coiled coil. Acidic residues-rich tracts occupy residues glutamate 344 to asparagine 363 and asparagine 373 to aspartate 387.

Interacts with MED18 to suppress disease susceptibility via the repression of genes glutaredoxins GRX480, GRXS13 and thioredoxin TRX-h5. As to expression, mostly expressed in flowers, to a lower extent in seedlings, stems and leaves, and, at low levels, in roots and senescent leaves.

The protein resides in the nucleus. Dual-function transcription factor with both repression and activation activities. Binds to 5'-CCATATT-3' motif in target gene promoters (e.g. ABR1). Also binds to G-rich DNA motif 5'-GGGGGCAGTGG-3'. Regulates the expression of genes involved in diverse cellular pathways, including glucose metabolism, photosynthesis, phototropism and stress response (e.g. salt, drought and osmotic stress). Regulates plant immunity, especially during necrotrophic fungal infection (e.g. B.cinerea). Binds to ABR1 promoter and promotes its expression, thus negatively regulating the abscisic acid (ABA) signaling pathway. Represses ABA- and salt-responsive genes expression. This is Zinc finger transcription factor YY1 from Arabidopsis thaliana (Mouse-ear cress).